Consider the following 437-residue polypeptide: Transmembrane protease serine 4 (437 aa).

The Cytoplasmic segment spans residues 1–32 (MLQDPDSDQPLNSLDVKPLRKPRIPMETFRKV). A helical; Signal-anchor for type II membrane protein transmembrane segment spans residues 33–53 (GIPIIIALLSLASIIIVVVLI). Residues 54–437 (KVILDKYYFL…WIYNVWKAEL (384 aa)) are Extracellular-facing. The LDL-receptor class A domain maps to 61 to 93 (YFLCGQPLHFIPRKQLCDGELDCPLGEDEEHCV). Cystine bridges form between Cys-64-Cys-83, Cys-77-Cys-92, Cys-127-Cys-183, Cys-140-Cys-193, Cys-196-Cys-310, Cys-230-Cys-246, Cys-356-Cys-372, and Cys-383-Cys-410. The 111-residue stretch at 94-204 (KSFPEGPAVA…ACGKSLKTPR (111 aa)) folds into the SRCR domain. Asn-130 and Asn-178 each carry an N-linked (GlcNAc...) asparagine glycan. Residues 205–434 (VVGVEEASVD…YLNWIYNVWK (230 aa)) form the Peptidase S1 domain. Residues His-245 and Asp-290 each act as charge relay system in the active site. The Charge relay system role is filled by Ser-387.

Belongs to the peptidase S1 family. In terms of processing, proteolytically processed; probably by an autocatalytic mechanism. High levels in pancreatic, gastric, colorectal and ampullary cancer. Very weak expression in normal gastrointestinal and urogenital tract. Coexpressed with ACE2 within mature enterocytes.

The protein localises to the cell membrane. The protein resides in the secreted. Functionally, plasma membrane-anchored serine protease that directly induces processing of pro-uPA/PLAU into the active form through proteolytic activity. Seems to be capable of activating ENaC. (Microbial infection) In gut epithelial cells, facilitates human coronavirus SARS-CoV-2 infection through, at least, the cleavage of coronavirus spike glycoproteins which activates the glycoprotein for host cell entry. This Homo sapiens (Human) protein is Transmembrane protease serine 4.